The primary structure comprises 128 residues: MQIIHRVAVMQVLTERSKEKLLASFAEKKQMLERECSQLYFQLRKHEKEQQNPNMIEQFKKAIEKRKDDIKIIDFQIAQVHTLPLGSELKEKEVDALLTIEAGDDWHEKTAANTIVIKDGKVIEIRQR.

This is an uncharacterized protein from Bacillus subtilis (strain 168).